We begin with the raw amino-acid sequence, 911 residues long: Translation initiation factor IF-2 (911 aa).

Basic and acidic residues-rich tracts occupy residues 80 to 94 (LEEQ…EQQL) and 101 to 113 (RPER…RTEV). Disordered regions lie at residues 80-142 (LEEQ…VSEP), 153-172 (VKSP…DVEG), and 195-309 (SSLG…KMRK). Residues 214 to 256 (KEQADELKDEFDIKAKEGGKEREAGGESRKPVKKGSEETKKTT) are compositionally biased toward basic and acidic residues. Basic residues predominate over residues 262-272 (AKKKKGKKKKK). Over residues 273 to 284 (PEVDEKTIEKNI) the composition is skewed to basic and acidic residues. The segment covering 286–300 (STISGMDDTSGSGSS) has biased composition (low complexity). The 171-residue stretch at 408–578 (IRPPVVTIMG…LTEAEIRELK (171 aa)) folds into the tr-type G domain. Positions 417–424 (GHVDHGKT) are G1. 417–424 (GHVDHGKT) provides a ligand contact to GTP. Positions 442 to 446 (GITQH) are G2. Residues 464–467 (DTPG) are G3. Residues 464 to 468 (DTPGH) and 518 to 521 (NKID) each bind GTP. A G4 region spans residues 518 to 521 (NKID). Residues 554 to 556 (SAK) are G5.

The protein belongs to the TRAFAC class translation factor GTPase superfamily. Classic translation factor GTPase family. IF-2 subfamily.

It is found in the cytoplasm. In terms of biological role, one of the essential components for the initiation of protein synthesis. Protects formylmethionyl-tRNA from spontaneous hydrolysis and promotes its binding to the 30S ribosomal subunits. Also involved in the hydrolysis of GTP during the formation of the 70S ribosomal complex. The chain is Translation initiation factor IF-2 from Chlorobium phaeobacteroides (strain BS1).